Reading from the N-terminus, the 118-residue chain is Large ribosomal subunit protein bL17 (118 aa).

It belongs to the bacterial ribosomal protein bL17 family. As to quaternary structure, part of the 50S ribosomal subunit. Contacts protein L32.

This chain is Large ribosomal subunit protein bL17, found in Gemmatimonas aurantiaca (strain DSM 14586 / JCM 11422 / NBRC 100505 / T-27).